Consider the following 178-residue polypeptide: Mediator of RNA polymerase II transcription subunit 30 (178 aa).

The segment at 1 to 22 (MSTPPLAPTGMASGPFGGPQAQ) is disordered. An N-acetylserine modification is found at Ser2. Positions 134–173 (FASEERREIVEVNKKLKQKNQQLKQIMDQLRNLIWDINAM) form a coiled coil.

The protein belongs to the Mediator complex subunit 30 family. Component of the Mediator complex, which is composed of MED1, MED4, MED6, MED7, MED8, MED9, MED10, MED11, MED12, MED13, MED13L, MED14, MED15, MED16, MED17, MED18, MED19, MED20, MED21, MED22, MED23, MED24, MED25, MED26, MED27, MED29, MED30, MED31, CCNC, CDK8 and CDC2L6/CDK11. The MED12, MED13, CCNC and CDK8 subunits form a distinct module termed the CDK8 module. Mediator containing the CDK8 module is less active than Mediator lacking this module in supporting transcriptional activation. Individual preparations of the Mediator complex lacking one or more distinct subunits have been variously termed ARC, CRSP, DRIP, PC2, SMCC and TRAP.

Its subcellular location is the nucleus. Its function is as follows. Component of the Mediator complex, a coactivator involved in the regulated transcription of nearly all RNA polymerase II-dependent genes. Mediator functions as a bridge to convey information from gene-specific regulatory proteins to the basal RNA polymerase II transcription machinery. Mediator is recruited to promoters by direct interactions with regulatory proteins and serves as a scaffold for the assembly of a functional preinitiation complex with RNA polymerase II and the general transcription factors. The sequence is that of Mediator of RNA polymerase II transcription subunit 30 (Med30) from Mus musculus (Mouse).